The primary structure comprises 53 residues: Large ribosomal subunit protein bL32c (53 aa).

The protein belongs to the bacterial ribosomal protein bL32 family.

Its subcellular location is the plastid. The protein resides in the chloroplast. This Coffea arabica (Arabian coffee) protein is Large ribosomal subunit protein bL32c.